We begin with the raw amino-acid sequence, 337 residues long: Mitochondrial glutathione transporter SLC25A40 (337 aa).

Solcar repeat units follow at residues Val-14–Phe-132, Asn-140–Trp-224, and Pro-234–Phe-328. Helical transmembrane passes span Met-20–Val-40, Leu-104–Thr-124, Ile-146–Ile-166, Trp-200–Leu-221, Phe-240–Val-260, and Gly-299–Ile-319.

It belongs to the mitochondrial carrier (TC 2.A.29) family.

It is found in the mitochondrion inner membrane. The catalysed reaction is glutathione(in) = glutathione(out). Its function is as follows. Probable mitochondrial transporter required for glutathione import into mitochondria. Glutathione, which plays key roles in oxidative metabolism, is produced exclusively in the cytosol and is imported in many organelles. Mitochondrial glutathione is required for the activity and stability of proteins containing iron-sulfur clusters, as well as erythropoiesis. The sequence is that of Mitochondrial glutathione transporter SLC25A40 from Mus musculus (Mouse).